The following is a 512-amino-acid chain: tRNA-2-methylthio-N(6)-dimethylallyladenosine synthase (512 aa).

The 117-residue stretch at 17-133 folds into the MTTase N-terminal domain; it reads RTYEVRTFGC…LPTLLERSAH (117 aa). [4Fe-4S] cluster contacts are provided by Cys26, Cys62, Cys96, Cys170, Cys174, and Cys177. One can recognise a Radical SAM core domain in the interval 156–392; that stretch reads RESAYAGWVS…LALQERISEE (237 aa). A TRAM domain is found at 395 to 461; it reads RKLIGTTQEL…PHFLIADGGV (67 aa). The tract at residues 473-512 is disordered; it reads TELGETPTTAPVGVGLGMPSIKKPEPTTAGGCSTGGCGCE.

Belongs to the methylthiotransferase family. MiaB subfamily. In terms of assembly, monomer. It depends on [4Fe-4S] cluster as a cofactor.

The protein resides in the cytoplasm. It carries out the reaction N(6)-dimethylallyladenosine(37) in tRNA + (sulfur carrier)-SH + AH2 + 2 S-adenosyl-L-methionine = 2-methylsulfanyl-N(6)-dimethylallyladenosine(37) in tRNA + (sulfur carrier)-H + 5'-deoxyadenosine + L-methionine + A + S-adenosyl-L-homocysteine + 2 H(+). In terms of biological role, catalyzes the methylthiolation of N6-(dimethylallyl)adenosine (i(6)A), leading to the formation of 2-methylthio-N6-(dimethylallyl)adenosine (ms(2)i(6)A) at position 37 in tRNAs that read codons beginning with uridine. This Corynebacterium jeikeium (strain K411) protein is tRNA-2-methylthio-N(6)-dimethylallyladenosine synthase.